The chain runs to 140 residues: Vacuolar protein sorting-associated protein 55 homolog (140 aa).

Residues 1–16 (MADVPGYLRTCLDMGK) lie on the Cytoplasmic side of the membrane. Residues 17 to 37 (IAFLAILVSTGIVLQILACAL) form a helical membrane-spanning segment. Topologically, residues 38–40 (FNN) are lumenal. A helical transmembrane segment spans residues 41-61 (WWPMLSVIMYVLLPMPLLFFG). The Cytoplasmic portion of the chain corresponds to 62–75 (GSDSTSLFNESDNS). Residues 76–98 (WINAAKFLTGASAVGSVAIPSIL) traverse the membrane as a helical segment. Residues 99 to 108 (KHAGLIGWGA) are Lumenal-facing. The chain crosses the membrane as a helical span at residues 109-129 (LALDLSSYVVFLVAILGYICI). At 130-140 (GDASDNYYSYI) the chain is on the cytoplasmic side.

This sequence belongs to the OB-RGRP/VPS55 family.

It is found in the endosome membrane. Involved in endosomal protein transport. This is Vacuolar protein sorting-associated protein 55 homolog from Arabidopsis thaliana (Mouse-ear cress).